An 867-amino-acid polypeptide reads, in one-letter code: KH domain-containing protein akap-1 (867 aa).

The helical transmembrane segment at 108-128 (HALLIALGGFSIAALFVWYIN) threads the bilayer. Disordered regions lie at residues 145–458 (SNGL…QKRV) and 481–523 (HENA…GLTT). The span at 152–162 (ATASDVQTENG) shows a compositional bias: polar residues. 4 stretches are compositionally biased toward basic and acidic residues: residues 186–211 (QQKD…DKKQ), 218–239 (TEKK…DHVA), 247–275 (SEHK…EIEV), and 298–307 (QFVKKEEPKL). The span at 336–345 (TKMNDATSPL) shows a compositional bias: polar residues. Basic and acidic residues predominate over residues 363-383 (EMEKSFNEEEFRLNESSDIDR). Residues 397-408 (NKNRSSQKRKGG) show a composition bias toward basic residues. Composition is skewed to basic and acidic residues over residues 441–458 (LTKE…QKRV) and 481–490 (HENASYEKSD). The span at 494-507 (LDSQNSEASSQDSG) shows a compositional bias: polar residues. The 68-residue stretch at 528 to 595 (LPMYEFEIPN…DEINHCLQML (68 aa)) folds into the KH domain. The region spanning 689-747 (PCQNGLLCAAPVGNAWFRAVTVQYFDETDEVFVKFVDYGGYSKMARQDLRQIRTDLMSL) is the Tudor domain.

Its subcellular location is the membrane. The protein is KH domain-containing protein akap-1 of Caenorhabditis elegans.